A 260-amino-acid polypeptide reads, in one-letter code: DNA repair protein RecO (260 aa).

This sequence belongs to the RecO family.

Its function is as follows. Involved in DNA repair and RecF pathway recombination. The chain is DNA repair protein RecO from Desulfosudis oleivorans (strain DSM 6200 / JCM 39069 / Hxd3) (Desulfococcus oleovorans).